The chain runs to 255 residues: NAD kinase (255 aa).

The active-site Proton acceptor is the D44. NAD(+) contacts are provided by residues D44 to G45, H49, N114 to E115, D144, A152, S155 to S160, and Q216.

The protein belongs to the NAD kinase family. It depends on a divalent metal cation as a cofactor.

The protein localises to the cytoplasm. The catalysed reaction is NAD(+) + ATP = ADP + NADP(+) + H(+). Functionally, involved in the regulation of the intracellular balance of NAD and NADP, and is a key enzyme in the biosynthesis of NADP. Catalyzes specifically the phosphorylation on 2'-hydroxyl of the adenosine moiety of NAD to yield NADP. This is NAD kinase from Rickettsia conorii (strain ATCC VR-613 / Malish 7).